An 838-amino-acid polypeptide reads, in one-letter code: Kinesin-like protein KIFC2 (838 aa).

Over residues 23–32 (AAAAEPGDPA) the composition is skewed to low complexity. Disordered stretches follow at residues 23–48 (AAAA…DLPA) and 140–185 (LLQG…GQQP). Over residues 156–167 (DGSTSQEESPSH) the composition is skewed to polar residues. Residues 186-351 (LQLEEDQRAW…SLRQGCGDLR (166 aa)) adopt a coiled-coil conformation. One can recognise a Kinesin motor domain in the interval 409-740 (NIRVLCRLRP…ARRSPRGRRI (332 aa)). 484 to 491 (GQTGTGKT) lines the ATP pocket. Residues 718 to 792 (RSPPTRARPP…SPGPPAPLRR (75 aa)) form a disordered region.

It belongs to the TRAFAC class myosin-kinesin ATPase superfamily. Kinesin family.

The protein localises to the cytoplasm. The protein resides in the cytoskeleton. In terms of biological role, may play a role in microtubule-dependent retrograde axonal transport. May function as the motor for the transport of multivesicular body (MVB)-like organelles in dendrites. This chain is Kinesin-like protein KIFC2 (KIFC2), found in Homo sapiens (Human).